Here is a 607-residue protein sequence, read N- to C-terminus: Polyphenol oxidase, chloroplastic (607 aa).

The N-terminal 103 residues, 1 to 103 (MASLPWSLTT…LGATKPLAFG (103 aa)), are a transit peptide targeting the chloroplast. A disordered region spans residues 39–73 (RNRSRRFAPSKVSCNSANGDPNSDSTSDVRETSSG). The span at 50 to 64 (VSCNSANGDPNSDST) shows a compositional bias: polar residues. Intrachain disulfides connect C114/C129 and C128/C191. 6 residues coordinate Cu cation: H190, H211, H220, H342, H346, and H375. The segment at residues 194-211 (CQGAYDQVGYTDLELQVH) is a cross-link (2'-(S-cysteinyl)-histidine (Cys-His)).

The protein belongs to the tyrosinase family. It depends on Cu(2+) as a cofactor.

It localises to the plastid. It is found in the chloroplast thylakoid lumen. The catalysed reaction is 2 catechol + O2 = 2 1,2-benzoquinone + 2 H2O. In terms of biological role, catalyzes the oxidation of mono- and o-diphenols to o-diquinones. The polypeptide is Polyphenol oxidase, chloroplastic (Vitis vinifera (Grape)).